We begin with the raw amino-acid sequence, 313 residues long: Glutathione S-transferase omega-like 2 (313 aa).

Cys-49 functions as the Nucleophile in the catalytic mechanism. In terms of domain architecture, GST C-terminal spans 161 to 289 (PSSLRTKIDE…TDFKHIKCHY (129 aa)).

This sequence belongs to the GST superfamily. Omega family.

The protein resides in the cytoplasm. Its subcellular location is the nucleus. It is found in the golgi apparatus. The catalysed reaction is RX + glutathione = an S-substituted glutathione + a halide anion + H(+). It catalyses the reaction L-dehydroascorbate + 2 glutathione = glutathione disulfide + L-ascorbate. Functionally, active as '1-Cys' thiol transferase against beta-hydroxyethyl disulfide (HED), as dehydroascorbate reductase and as dimethylarsinic acid reductase, while not active against the standard GST substrate 1-chloro-2,4-dinitrobenzene (CDNB). May be involved in cell wall organization and biogenesis. The chain is Glutathione S-transferase omega-like 2 (gto2) from Schizosaccharomyces pombe (strain 972 / ATCC 24843) (Fission yeast).